A 693-amino-acid polypeptide reads, in one-letter code: Zinc finger protein 441 (693 aa).

Residues 4–79 (VAFEDVAINF…ERACEIKDNS (76 aa)) form the KRAB domain. The C2H2-type 1 zinc-finger motif lies at 169-190 (YDCKECASFSSLENLQRHMAAH). The C2H2-type 2; degenerate zinc finger occupies 196–218 (RICKLCGNAFIWPSLFHMLRRTH). The segment at 224 to 246 (YEYEQCSTAFPAYSSTLRHERTH) adopts a C2H2-type 3; degenerate zinc-finger fold. The segment at 252-274 (YQCKQCGKAFSCSCYTQLYERTH) adopts a C2H2-type 4; degenerate zinc-finger fold. C2H2-type zinc fingers lie at residues 280-302 (YECK…MIVH), 308-330 (HKCK…KRTH), 336-358 (YECK…MITH), 364-386 (HKCK…ETTH), 392-413 (YKCE…ETTH), 419-441 (YKCK…ERIH), 447-469 (YKCK…EKTH), 475-497 (YECK…MIMH), 503-525 (HKCK…ERIH), 531-553 (YKCK…ERTH), 559-581 (YGCQ…MITH), 587-609 (HKCK…ERTH), 615-637 (YECK…ERVH), 643-665 (YKCK…ERTH), and 671-693 (YKCK…EMTH).

It belongs to the krueppel C2H2-type zinc-finger protein family.

The protein resides in the nucleus. May be involved in transcriptional regulation. In Homo sapiens (Human), this protein is Zinc finger protein 441 (ZNF441).